Reading from the N-terminus, the 46-residue chain is Endochitinase 4 (46 aa).

The protein belongs to the glycosyl hydrolase 19 family. Chitinase class I subfamily.

It catalyses the reaction Random endo-hydrolysis of N-acetyl-beta-D-glucosaminide (1-&gt;4)-beta-linkages in chitin and chitodextrins.. Functionally, defense against chitin-containing fungal and bacterial pathogens. The protein is Endochitinase 4 of Arachis hypogaea (Peanut).